The chain runs to 271 residues: Probable ribosomal RNA small subunit methyltransferase A (271 aa).

S-adenosyl-L-methionine contacts are provided by L12, G37, E58, D83, and N100.

It belongs to the class I-like SAM-binding methyltransferase superfamily. rRNA adenine N(6)-methyltransferase family. RsmA subfamily.

Its subcellular location is the cytoplasm. Functionally, specifically dimethylates two adjacent adenosines in the loop of a conserved hairpin near the 3'-end of 16S rRNA in the 30S particle. May play a critical role in biogenesis of 30S subunits. In Methanococcus aeolicus (strain ATCC BAA-1280 / DSM 17508 / OCM 812 / Nankai-3), this protein is Probable ribosomal RNA small subunit methyltransferase A.